Here is a 295-residue protein sequence, read N- to C-terminus: Phosphoserine phosphatase, chloroplastic (295 aa).

The transit peptide at 1 to 54 directs the protein to the chloroplast; that stretch reads MEALTTSRVVPVQVPCRKLSSLFANFSCLELRRYPCRGLVSIMNHPKLLRPVTA. D89 serves as the catalytic Nucleophile. Residues D89 and D91 each contribute to the Mg(2+) site. The active-site Proton donor is D91. Substrate is bound by residues E98, R134, 178–179, and K227; that span reads SG. D248 is a binding site for Mg(2+).

Belongs to the HAD-like hydrolase superfamily. SerB family. Requires Mg(2+) as cofactor. As to expression, ubiquitous. Mainly expressed in shoot and root meristems, vasculature, pollen, anthers, carpels and seeds.

The protein localises to the plastid. It is found in the chloroplast. It carries out the reaction O-phospho-L-serine + H2O = L-serine + phosphate. It catalyses the reaction O-phospho-D-serine + H2O = D-serine + phosphate. Its pathway is amino-acid biosynthesis; L-serine biosynthesis; L-serine from 3-phospho-D-glycerate: step 3/3. With respect to regulation, approximately 60% inhibition of PSP activity is observed in presence of 10 mM serine. Functionally, catalyzes the last step in the plastidial phosphorylated pathway of serine biosynthesis (PPSB). The reaction mechanism proceeds via the formation of a phosphoryl-enzyme intermediates. Required for embryo, pollen and root development. May be required preferentially for serine biosynthesis in non-photosynthetic tissues. This is Phosphoserine phosphatase, chloroplastic (PSP) from Arabidopsis thaliana (Mouse-ear cress).